The chain runs to 241 residues: Uracil-DNA glycosylase (241 aa).

The Proton acceptor role is filled by Asp68.

This sequence belongs to the uracil-DNA glycosylase (UDG) superfamily. UNG family.

It localises to the cytoplasm. The catalysed reaction is Hydrolyzes single-stranded DNA or mismatched double-stranded DNA and polynucleotides, releasing free uracil.. Functionally, excises uracil residues from the DNA which can arise as a result of misincorporation of dUMP residues by DNA polymerase or due to deamination of cytosine. The protein is Uracil-DNA glycosylase of Sinorhizobium medicae (strain WSM419) (Ensifer medicae).